Reading from the N-terminus, the 473-residue chain is High-affinity proline transporter PutP (473 aa).

The next 12 helical transmembrane spans lie at 32-52, 56-76, 114-134, 146-166, 171-191, 218-238, 256-276, 299-319, 350-370, 376-396, 408-428, and 431-451; these read LSAG…GAMF, LSGA…WLYV, IVIL…GGVL, GLWI…FLAV, FVQG…TFFH, VLGI…PHII, IGMG…LGGI, ILFH…AIMS, LVFL…VLAW, ILGL…PVVL, GALA…NAGL, and FLYE…FVSI.

It belongs to the sodium:solute symporter (SSF) (TC 2.A.21) family.

The protein localises to the cell membrane. The enzyme catalyses L-proline(in) + Na(+)(in) = L-proline(out) + Na(+)(out). In terms of biological role, catalyzes the high-affinity uptake of extracellular proline. Important for the use of proline as a sole carbon and energy source or a sole nitrogen source. The sequence is that of High-affinity proline transporter PutP from Bacillus subtilis (strain 168).